A 116-amino-acid polypeptide reads, in one-letter code: Nucleoid-associated protein P9515_00191 (116 aa).

Over residues 89–98 the composition is skewed to basic and acidic residues; the sequence is STTTMKERMN. The interval 89–116 is disordered; the sequence is STTTMKERMNDLTGGLNLNLPGLDNNDS. Low complexity predominate over residues 99 to 116; that stretch reads DLTGGLNLNLPGLDNNDS.

This sequence belongs to the YbaB/EbfC family. Homodimer.

Its subcellular location is the cytoplasm. It is found in the nucleoid. Binds to DNA and alters its conformation. May be involved in regulation of gene expression, nucleoid organization and DNA protection. In Prochlorococcus marinus (strain MIT 9515), this protein is Nucleoid-associated protein P9515_00191.